A 256-amino-acid chain; its full sequence is Small ribosomal subunit protein eS1 (256 aa).

Over residues Met1 to Lys18 the composition is skewed to basic residues. The tract at residues Met1–Asp22 is disordered. Ala2 bears the N-acetylalanine; partial mark.

This sequence belongs to the eukaryotic ribosomal protein eS1 family. In terms of assembly, component of the small ribosomal subunit (SSU). Mature N.crassa ribosomes consist of a small (40S) and a large (60S) subunit. The 40S small subunit contains 1 molecule of ribosomal RNA (18S rRNA) and at least 32 different proteins. The large 60S subunit contains 3 rRNA molecules (26S, 5.8S and 5S rRNA) and at least 42 different proteins.

The protein localises to the cytoplasm. Functionally, component of the ribosome, a large ribonucleoprotein complex responsible for the synthesis of proteins in the cell. The small ribosomal subunit (SSU) binds messenger RNAs (mRNAs) and translates the encoded message by selecting cognate aminoacyl-transfer RNA (tRNA) molecules. The large subunit (LSU) contains the ribosomal catalytic site termed the peptidyl transferase center (PTC), which catalyzes the formation of peptide bonds, thereby polymerizing the amino acids delivered by tRNAs into a polypeptide chain. The nascent polypeptides leave the ribosome through a tunnel in the LSU and interact with protein factors that function in enzymatic processing, targeting, and the membrane insertion of nascent chains at the exit of the ribosomal tunnel. This chain is Small ribosomal subunit protein eS1 (rps1), found in Neurospora crassa (strain ATCC 24698 / 74-OR23-1A / CBS 708.71 / DSM 1257 / FGSC 987).